A 209-amino-acid polypeptide reads, in one-letter code: Thymidine kinase (209 aa).

Residues 25–32 (GCMFAGKT) and 103–106 (DEVQ) each bind ATP. E104 acts as the Proton acceptor in catalysis. Residues C160, C163, C198, and C201 each contribute to the Zn(2+) site.

Belongs to the thymidine kinase family. Homotetramer.

It is found in the cytoplasm. It carries out the reaction thymidine + ATP = dTMP + ADP + H(+). The chain is Thymidine kinase from Mycoplasma mycoides subsp. mycoides SC (strain CCUG 32753 / NCTC 10114 / PG1).